Consider the following 914-residue polypeptide: TRPM8 channel-associated factor 2 (914 aa).

The Peptidase M60 domain maps to 541–840 (DAWMSTGLNL…TYLQLQEAFG (300 aa)).

Belongs to the TCAF family. Interacts with TRPM8 (via N-terminus and C-terminus domains); the interaction inhibits TRPM8 channel activity. Interacts with TRPV6.

The protein localises to the cell membrane. Negatively regulates the plasma membrane cation channel TRPM8 activity. Involved in the recruitment of TRPM8 to the cell surface. Promotes prostate cancer cell migration stimulation in a TRPM8-dependent manner. This is TRPM8 channel-associated factor 2 from Bos taurus (Bovine).